A 517-amino-acid polypeptide reads, in one-letter code: MKLQGSLACLLLALCLGGGAANPLHSGGEGTGASAAHGAGDAISHGIGEAVGQGAKEAASSGIQNALGQGHGEEGGSTLMGSRGDVFEHRLGEAARSLGNAGNEIGRQAEDIIRQGVDAVHNAGSWGTSGGHGAYGSQGGAGVQGNPGPQGTPWASGGNYGTNSLGGSVGQGGNGGPLDYETNAQGAVAQPGYGTVRGNNQNSGCTNPPPSGSHESFSNSGGSSNDGSRGSQGSHGSNGQGSSGRGGGQGNSDNNGSSSSSSGSNSGNSNSGNSGNSNSGNSGNSGSGSRDIETSNFDEGYSVSRGTGSRGGSGGSGGSGGSGGSGGSGGGNKPECNNPGNDVRMAGGSGSQGHGSNGGNIQKEAVNGLNTMNSDASTLPFNIDNFWENLKSKTRFINWDAINKGHAPSPSTRALLYFRKLWENFKRSTPFFNWKQIEGSDLSSLQKRAGGADQFSKPEARQDLSADSSKNYYNNQQVNPTYNWQYYTKTTAKAGVTPSSSSASRAQPGLLKWLKFW.

An N-terminal signal peptide occupies residues 1–21 (MKLQGSLACLLLALCLGGGAA). 2 disordered regions span residues 51–83 (VGQGAKEAASSGIQNALGQGHGEEGGSTLMGSR) and 123–364 (AGSW…IQKE). Gly residues-rich tracts occupy residues 127–145 (GTSGGHGAYGSQGGAGVQG) and 167–176 (GSVGQGGNGG). Residues 197 to 206 (RGNNQNSGCT) are compositionally biased toward polar residues. Residues 212-235 (GSHESFSNSGGSSNDGSRGSQGSH) show a composition bias toward low complexity. The span at 236–250 (GSNGQGSSGRGGGQG) shows a compositional bias: gly residues. The segment covering 251–289 (NSDNNGSSSSSSGSNSGNSNSGNSGNSNSGNSGNSGSGS) has biased composition (low complexity). Composition is skewed to gly residues over residues 308–332 (GSRGGSGGSGGSGGSGGSGGSGGGN) and 347–358 (GGSGSQGHGSNG).

The protein belongs to the dermokine family. As to quaternary structure, homooligomer. Seems to be able to homodimerize and homotrimerize. Post-translationally, O-glycosylated. As to expression, highly expressed in stratified epithelia; such as the skin, tongue, esophagus, forestomach and vagina. Also found in lung, trachea and urinary bladder.

Its subcellular location is the secreted. In terms of biological role, may act as a soluble regulator of keratinocyte differentiation. This is Dermokine (Dmkn) from Mus musculus (Mouse).